We begin with the raw amino-acid sequence, 379 residues long: Cytochrome b (379 aa).

The next 4 helical transmembrane spans lie at 33-53 (FGSLLGMCLVIQILTGLFLAM), 77-98 (WLIRYLHANGASMFFICLFIHV), 113-133 (WNIGIILLLTTMATAFVGYVL), and 178-198 (FFAFHFILPFIITALVLVHLL). Residues H83 and H97 each coordinate heme b. Residues H182 and H196 each contribute to the heme b site. H201 is an a ubiquinone binding site. 4 consecutive transmembrane segments (helical) span residues 226–246 (IKDLLGIFLLLMTLMILALFF), 288–308 (LGGVLALVLSILILATFPLLN), 320–340 (ITQTIYWIFIANLLVLTWIGG), and 347–367 (FTTIGQIASITYFTIIVIIMP).

Belongs to the cytochrome b family. As to quaternary structure, the cytochrome bc1 complex contains 11 subunits: 3 respiratory subunits (MT-CYB, CYC1 and UQCRFS1), 2 core proteins (UQCRC1 and UQCRC2) and 6 low-molecular weight proteins (UQCRH/QCR6, UQCRB/QCR7, UQCRQ/QCR8, UQCR10/QCR9, UQCR11/QCR10 and a cleavage product of UQCRFS1). This cytochrome bc1 complex then forms a dimer. The cofactor is heme b.

The protein resides in the mitochondrion inner membrane. Component of the ubiquinol-cytochrome c reductase complex (complex III or cytochrome b-c1 complex) that is part of the mitochondrial respiratory chain. The b-c1 complex mediates electron transfer from ubiquinol to cytochrome c. Contributes to the generation of a proton gradient across the mitochondrial membrane that is then used for ATP synthesis. The sequence is that of Cytochrome b (MT-CYB) from Deltamys kempi (Kemp's grass mouse).